The sequence spans 358 residues: Methylthioribose-1-phosphate isomerase (358 aa).

Substrate contacts are provided by residues 54-56 (RGA), Arg-96, and Gln-205. The active-site Proton donor is the Asp-246. Residue 256–257 (AK) coordinates substrate.

Belongs to the eIF-2B alpha/beta/delta subunits family. MtnA subfamily.

The catalysed reaction is 5-(methylsulfanyl)-alpha-D-ribose 1-phosphate = 5-(methylsulfanyl)-D-ribulose 1-phosphate. It functions in the pathway amino-acid biosynthesis; L-methionine biosynthesis via salvage pathway; L-methionine from S-methyl-5-thio-alpha-D-ribose 1-phosphate: step 1/6. Catalyzes the interconversion of methylthioribose-1-phosphate (MTR-1-P) into methylthioribulose-1-phosphate (MTRu-1-P). In Pseudomonas entomophila (strain L48), this protein is Methylthioribose-1-phosphate isomerase.